The sequence spans 89 residues: Small ribosomal subunit protein uS15 (89 aa).

It belongs to the universal ribosomal protein uS15 family. In terms of assembly, part of the 30S ribosomal subunit. Forms a bridge to the 50S subunit in the 70S ribosome, contacting the 23S rRNA.

Its function is as follows. One of the primary rRNA binding proteins, it binds directly to 16S rRNA where it helps nucleate assembly of the platform of the 30S subunit by binding and bridging several RNA helices of the 16S rRNA. Forms an intersubunit bridge (bridge B4) with the 23S rRNA of the 50S subunit in the ribosome. This chain is Small ribosomal subunit protein uS15, found in Nitratiruptor sp. (strain SB155-2).